The following is a 417-amino-acid chain: Gamma-glutamyl phosphate reductase (417 aa).

This sequence belongs to the gamma-glutamyl phosphate reductase family.

It is found in the cytoplasm. It catalyses the reaction L-glutamate 5-semialdehyde + phosphate + NADP(+) = L-glutamyl 5-phosphate + NADPH + H(+). The protein operates within amino-acid biosynthesis; L-proline biosynthesis; L-glutamate 5-semialdehyde from L-glutamate: step 2/2. In terms of biological role, catalyzes the NADPH-dependent reduction of L-glutamate 5-phosphate into L-glutamate 5-semialdehyde and phosphate. The product spontaneously undergoes cyclization to form 1-pyrroline-5-carboxylate. In Desulfitobacterium hafniense (strain DSM 10664 / DCB-2), this protein is Gamma-glutamyl phosphate reductase.